The sequence spans 2017 residues: Protein cbp-1 (2017 aa).

The span at 1–13 (MDEPPSKKSRADS) shows a compositional bias: basic and acidic residues. Positions 1 to 182 (MDEPPSKKSR…PGMFQGDQQQ (182 aa)) are disordered. Low complexity-rich tracts occupy residues 21-30 (ALSALESLEA) and 78-90 (QPGQSQPQQPPQN). Residues 106-116 (NPSQTSNNSPR) show a composition bias toward polar residues. A compositionally biased stretch (low complexity) spans 141–151 (MMSPPSMGRVP). Residues 152–164 (GPSPGGPQPPGPG) show a composition bias toward pro residues. Residues 165-182 (QPQMRPGQPGMFQGDQQQ) show a composition bias toward low complexity. Symmetric dimethylarginine; by PRMT5; in vitro is present on R234. The tract at residues 307-398 (SNGQPIRGPN…PGSSMLATHQ (92 aa)) is disordered. Over residues 340–379 (QAAAAQHAAQQQAAAQAQAQAAAQQQQQQQREQEAAAAAQ) the composition is skewed to low complexity. The TAZ-type 1 zinc finger occupies 399–505 (DPEKRKLIQQ…REDCPVCKPL (107 aa)). Disordered regions lie at residues 558–593 (EGFNGNPFQNGPNRGGPRPPGGNGEIPNLPPPDMPD) and 706–864 (GRSD…DTVF). Positions 559–573 (GFNGNPFQNGPNRGG) are enriched in low complexity. The 80-residue stretch at 593–672 (DCTKEWHHQV…KIYKIQKELQ (80 aa)) folds into the KIX domain. Over residues 721–773 (PSQQNQPWGGAPNSNMHQQIPPNGQVPQVNNSSTFPSSGNSTPNIGASSTVSA) the composition is skewed to polar residues. The span at 834–854 (KDTKDGVAESKPKEQQAKREP) shows a compositional bias: basic and acidic residues. Residues 864 to 970 (FSQEDLIKFL…EMFVSEMDPV (107 aa)) form the Bromo domain. Interaction with histone stretches follow at residues 902-948 (DYHE…YNRK) and 1224-1226 (YLD). A CBP/p300-type HAT domain is found at 1112–1492 (KYLASKLPHN…LAYSLHETDS (381 aa)). Residues 1225–1227 (LDS), 1237–1238 (RT), I1284, R1289, and W1293 each bind acetyl-CoA. Positions 1349-1358 (NEEAQRKVKE) are enriched in basic and acidic residues. Positions 1349–1401 (NEEAQRKVKEDDDDGEDADGGLGGGDSGKKKSSKNKKNNLKKNAKMNKKKAGS) are disordered. Positions 1378–1399 (KKSSKNKKNNLKKNAKMNKKKA) are enriched in basic residues. The segment at 1494–1540 (GMEYTCNKCSSPAVWHCQSCDDFDLCDGCKPTTQHPHEMEKIKSLIG) adopts a ZZ-type zinc-finger fold. C1499, C1502, C1510, C1513, C1519, C1522, H1528, and H1530 together coordinate Zn(2+). The TAZ-type 2 zinc finger occupies 1550 to 1631 (GGTRYESIQR…ACTVPFCMNI (82 aa)). 2 disordered regions span residues 1656-1828 (GLQS…QPVR) and 1908-2017 (SQMS…AGGQ). Polar residues predominate over residues 1667 to 1678 (TPSTVSNGTPSN). The span at 1699-1708 (QVQMQQHQGS) shows a compositional bias: low complexity. The segment covering 1748 to 1757 (PQMNANQSRY) has biased composition (polar residues). Composition is skewed to low complexity over residues 1793–1812 (MNPQQQPQQQQGHPGLQNPG) and 1908–1932 (SQMSMGSSNLQNLQQQQLQQQQAGA). Residues 1943–1962 (QNNSQPRAPSGQFASMNPSM) are compositionally biased toward polar residues. Over residues 1963–2017 (QQQYPQQQQGWPQQRQQNPGGMQQNANPYNQFQNRQNMMMMPQQQQPHPSNAGGQ) the composition is skewed to low complexity.

In terms of assembly, interacts (via N-terminus domain and HAT domain) with prmt-5; the interaction results in methylation of cbp-1. Interacts (via HAT domain) with cep-1; cep-1 transcriptional activity may be inhibited by interaction with methylated cbp-1. Component of a complex that contains prmt-5 and cbp-1. Post-translationally, methylation by prmt-5 may repress the capacity of cbp-1 to enhance cep-1-dependent transcription of egl-1.

It localises to the nucleus. It catalyses the reaction L-lysyl-[protein] + acetyl-CoA = N(6)-acetyl-L-lysyl-[protein] + CoA + H(+). Functionally, acetyltransferase enzyme. Acetylates histones, giving a specific tag for transcriptional activation. May prevent DNA damage-induced apoptosis by inhibiting cep-1-dependent transcription activation of the programmed cell death activator egl-1. In differentiated cells, negatively regulates localization of heterochromatin to the nuclear periphery. Plays a role in migration of gonadal distal tip cells, where it probably modulates expression of genes involved in integrin-mediated adhesion. The protein is Protein cbp-1 (cbp-1) of Caenorhabditis elegans.